A 454-amino-acid chain; its full sequence is LETM1 domain-containing protein YLH47, mitochondrial (454 aa).

The N-terminal 45 residues, methionine 1–tryptophan 45, are a transit peptide targeting the mitochondrion. The Mitochondrial intermembrane segment spans residues asparagine 46 to arginine 136. Residues glutamate 51–valine 73 form a disordered region. A helical membrane pass occupies residues leucine 137–leucine 157. The Mitochondrial matrix segment spans residues lysine 158–lysine 454. A Letm1 RBD domain is found at lysine 177–aspartate 371. A coiled-coil region spans residues glutamate 376–leucine 423. 2 stretches are compositionally biased toward basic and acidic residues: residues glutamate 420–isoleucine 430 and valine 437–lysine 454. The disordered stretch occupies residues glutamate 420–lysine 454.

Associates with the mitochondrial ribosomes.

It is found in the mitochondrion inner membrane. Its function is as follows. Involved in mitochondrial potassium homeostasis through the mitochondrial K(+)/H(+) exchange regulation. This chain is LETM1 domain-containing protein YLH47, mitochondrial (YLH47), found in Saccharomyces cerevisiae (strain ATCC 204508 / S288c) (Baker's yeast).